Consider the following 27-residue polypeptide: Potassium channel toxin alpha-KTx 32.1 (27 aa).

Intrachain disulfides connect cysteine 5/cysteine 18 and cysteine 12/cysteine 25.

In terms of tissue distribution, expressed by the venom gland.

It localises to the secreted. Functionally, blocker of voltage-gated potassium channels. Inhibits voltage-gated potassium channels Kv1.2/KCNA2 (Kd=0.96 nM) and Kv1.3/KCNA3 (Kd=1.3 nM). Does not inhibit Kv1.1/KCNA1, Kv1.5/KCNA5, Kv11.1/KCNH2/ERG1, KCa1.1/KCNMA1, KCa3.1/KCNN4, NaV1.5/SCN5A, NaV1.4/SCN4A or HV1/HVCN1. Strongly inhibits the expression of the activation markers interleukin-2 receptor and CD40 ligand/CD40LG in anti-CD3-activated CD4(+) TEM lymphocytes. The sequence is that of Potassium channel toxin alpha-KTx 32.1 from Centruroides margaritatus (Central American bark Scorpion).